The chain runs to 197 residues: MEAFTTHTGRAVPLRRSNVDTDQIIPAHWLKKVTRDGFEDGLFEAWRKDESFILNRPERTGATVLVAGPDFGTGSSREHAVWALQNYGFKAVISSRFADIFRGNSLKNGLLTVVLEQKIVDALWELTEKDPQAEVTVDLEAREVRAEGITAAFELDENARWRLLNGLDDISITLQNEGDIATYEAKRPSHKPRTLQV.

It belongs to the LeuD family. LeuD type 1 subfamily. As to quaternary structure, heterodimer of LeuC and LeuD.

It carries out the reaction (2R,3S)-3-isopropylmalate = (2S)-2-isopropylmalate. It functions in the pathway amino-acid biosynthesis; L-leucine biosynthesis; L-leucine from 3-methyl-2-oxobutanoate: step 2/4. Functionally, catalyzes the isomerization between 2-isopropylmalate and 3-isopropylmalate, via the formation of 2-isopropylmaleate. The sequence is that of 3-isopropylmalate dehydratase small subunit from Streptomyces avermitilis (strain ATCC 31267 / DSM 46492 / JCM 5070 / NBRC 14893 / NCIMB 12804 / NRRL 8165 / MA-4680).